The primary structure comprises 476 residues: Inner membrane transporter YcaM (476 aa).

The Cytoplasmic segment spans residues Met-1 to Gln-9. Residues Leu-10–Val-30 traverse the membrane as a helical segment. At Asn-31–Leu-38 the chain is on the periplasmic side. Residues Val-39–Val-59 form a helical membrane-spanning segment. Residues Gly-60 to Thr-80 lie on the Cytoplasmic side of the membrane. A helical transmembrane segment spans residues Met-81 to Leu-101. Topologically, residues Ala-102–Glu-125 are periplasmic. Residues Tyr-126 to Ala-146 traverse the membrane as a helical segment. The Cytoplasmic portion of the chain corresponds to Ser-147 to Lys-154. A helical membrane pass occupies residues Ile-155–Ala-175. The Periplasmic portion of the chain corresponds to Val-176–Thr-195. A helical transmembrane segment spans residues Phe-196–Gly-216. Topologically, residues Gly-217–Leu-240 are cytoplasmic. Residues Cys-241–Phe-261 form a helical membrane-spanning segment. At Asp-262–Thr-291 the chain is on the periplasmic side. A helical membrane pass occupies residues Leu-292 to Ile-312. Residues Asp-313–Asn-343 are Cytoplasmic-facing. Residues Gly-344–Gly-364 traverse the membrane as a helical segment. The Periplasmic portion of the chain corresponds to Asp-365–Asn-375. A helical membrane pass occupies residues Leu-376–Val-396. Over Arg-397–Leu-414 the chain is Cytoplasmic. The chain crosses the membrane as a helical span at residues Ala-415–Phe-435. At Pro-436–Gln-448 the chain is on the periplasmic side. The chain crosses the membrane as a helical span at residues Leu-449–Leu-469. Residues Ala-470–Lys-476 lie on the Cytoplasmic side of the membrane.

Belongs to the amino acid-polyamine-organocation (APC) superfamily.

It is found in the cell inner membrane. The sequence is that of Inner membrane transporter YcaM (ycaM) from Escherichia coli (strain K12).